A 564-amino-acid chain; its full sequence is MLRTTRGPGLGPPLLQAALGLGRAGWHWPAGRAASGGRGRAWLQPTGRETGVQVYNSLTGRKEPLIVAHAEAASWYSCGPTVYDHAHLGHACSYVRFDIIRRILTKVFGCSIVMVMGITDVDDKIIKRANEMNISPASLASLYEEDFKQDMAALKVLPPTVYLRVTENIPQIISFIEGIIARGNAYSTAKGNVYFDLKSRGDKYGKLVGVVPGPVGEPADSDKRHASDFALWKAAKPQEVFWASPWGPGRPGWHIECSAIASMVFGSQLDIHSGGIDLAFPHHENEIAQCEVFHQCEQWGNYFLHSGHLHAKGKEEKMSKSLKNYITIKDFLKTFSPDVFRFFCLRSSYRSAIDYSDSAMLQAQQLLLGLGSFLEDARAYMKGQLACGSVREAMLWERLSSTKRAVKAALADDFDTPRVVDAILGLAHHGNGQLRASLKEPEGPRSPAVFGAIISYFEQFFETVGISLANQQYVSGDGSEATLHGVVDELVRFRQKVRQFALAMPEATGDARRQQLLERQPLLEACDTLRRGLTAHGINIKDRSSTTSTWELLDQRTKDQKSAG.

Zn(2+) is bound at residue cysteine 78. Glycine 79 contacts L-cysteine. The 'HIGH' region motif lies at 80 to 90 (PTVYDHAHLGH). Threonine 119 contributes to the L-cysteine binding site. The 'KIIK' region motif lies at 124–127 (KIIK). Zn(2+) contacts are provided by cysteine 257, histidine 282, and glutamate 286. Histidine 282 lines the L-cysteine pocket. Positions 317–321 (KMSKS) match the 'KMSKS' region motif. Lysine 320 is an ATP binding site.

This sequence belongs to the class-I aminoacyl-tRNA synthetase family. It depends on Zn(2+) as a cofactor.

Its subcellular location is the mitochondrion. It catalyses the reaction tRNA(Cys) + L-cysteine + ATP = L-cysteinyl-tRNA(Cys) + AMP + diphosphate. The enzyme catalyses 2 L-cysteine = S-sulfanyl-L-cysteine + L-alanine. It carries out the reaction S-sulfanyl-L-cysteine + L-cysteine = S-disulfanyl-L-cysteine + L-alanine. The catalysed reaction is S-sulfanyl-L-cysteine + tRNA(Cys) + ATP = (S)-sulfanyl-L-cysteinyl-tRNA(Cys) + AMP + diphosphate. It catalyses the reaction S-disulfanyl-L-cysteine + tRNA(Cys) + ATP = (S)-disulfanyl-L-cysteinyl-tRNA(Cys) + AMP + diphosphate. Its function is as follows. Mitochondrial cysteine-specific aminoacyl-tRNA synthetase that catalyzes the ATP-dependent ligation of cysteine to tRNA(Cys). Functionally, in addition to its role as an aminoacyl-tRNA synthetase, has also cysteine persulfide synthase activity. Produces reactive persulfide species such as cysteine persulfide (CysSSH) from substrate cysteine and mediate direct incorporation of CysSSH into proteins during translations, resulting in protein persulfides and polysulfides. CysSSHs behave as potent antioxidants and cellular protectants. The chain is Probable cysteine--tRNA ligase, mitochondrial from Homo sapiens (Human).